Here is a 260-residue protein sequence, read N- to C-terminus: tRNA pseudouridine synthase A (260 aa).

The active-site Nucleophile is the D52. Position 111 (Y111) interacts with substrate.

It belongs to the tRNA pseudouridine synthase TruA family. As to quaternary structure, homodimer.

It carries out the reaction uridine(38/39/40) in tRNA = pseudouridine(38/39/40) in tRNA. Its function is as follows. Formation of pseudouridine at positions 38, 39 and 40 in the anticodon stem and loop of transfer RNAs. This chain is tRNA pseudouridine synthase A, found in Beijerinckia indica subsp. indica (strain ATCC 9039 / DSM 1715 / NCIMB 8712).